We begin with the raw amino-acid sequence, 370 residues long: Chorismate synthase (370 aa).

Positions 48 and 54 each coordinate NADP(+). FMN contacts are provided by residues 130–132 (RSS), 242–243 (NA), Gly-287, 302–306 (KPTSS), and Arg-328.

This sequence belongs to the chorismate synthase family. In terms of assembly, homotetramer. Requires FMNH2 as cofactor.

The enzyme catalyses 5-O-(1-carboxyvinyl)-3-phosphoshikimate = chorismate + phosphate. It functions in the pathway metabolic intermediate biosynthesis; chorismate biosynthesis; chorismate from D-erythrose 4-phosphate and phosphoenolpyruvate: step 7/7. Its function is as follows. Catalyzes the anti-1,4-elimination of the C-3 phosphate and the C-6 proR hydrogen from 5-enolpyruvylshikimate-3-phosphate (EPSP) to yield chorismate, which is the branch point compound that serves as the starting substrate for the three terminal pathways of aromatic amino acid biosynthesis. This reaction introduces a second double bond into the aromatic ring system. In Xanthobacter autotrophicus (strain ATCC BAA-1158 / Py2), this protein is Chorismate synthase.